A 441-amino-acid chain; its full sequence is Amino-acid acetyltransferase (441 aa).

Residues 295-434 (EQVRRATIND…QELYNYQRRS (140 aa)) enclose the N-acetyltransferase domain.

It belongs to the acetyltransferase family. ArgA subfamily. In terms of assembly, homohexamer.

The protein resides in the cytoplasm. It carries out the reaction L-glutamate + acetyl-CoA = N-acetyl-L-glutamate + CoA + H(+). The protein operates within amino-acid biosynthesis; L-arginine biosynthesis; N(2)-acetyl-L-ornithine from L-glutamate: step 1/4. This is Amino-acid acetyltransferase from Yersinia pseudotuberculosis serotype O:1b (strain IP 31758).